The chain runs to 59 residues: Sec-independent protein translocase protein TatA 1 (59 aa).

The chain crosses the membrane as a helical span at residues 3–23 (FPLPWQLILILLVILVIFGAS).

Belongs to the TatA/E family. Forms a complex with TatC.

It is found in the cell inner membrane. Its function is as follows. Part of the twin-arginine translocation (Tat) system that transports large folded proteins containing a characteristic twin-arginine motif in their signal peptide across membranes. TatA could form the protein-conducting channel of the Tat system. The chain is Sec-independent protein translocase protein TatA 1 from Aquifex aeolicus (strain VF5).